The primary structure comprises 222 residues: Peptide methionine sulfoxide reductase MsrA (222 aa).

The active site involves Cys-60.

It belongs to the MsrA Met sulfoxide reductase family.

The enzyme catalyses L-methionyl-[protein] + [thioredoxin]-disulfide + H2O = L-methionyl-(S)-S-oxide-[protein] + [thioredoxin]-dithiol. It carries out the reaction [thioredoxin]-disulfide + L-methionine + H2O = L-methionine (S)-S-oxide + [thioredoxin]-dithiol. Has an important function as a repair enzyme for proteins that have been inactivated by oxidation. Catalyzes the reversible oxidation-reduction of methionine sulfoxide in proteins to methionine. The polypeptide is Peptide methionine sulfoxide reductase MsrA (Pseudomonas putida (strain GB-1)).